We begin with the raw amino-acid sequence, 254 residues long: Ribosomal RNA small subunit methyltransferase J (254 aa).

S-adenosyl-L-methionine contacts are provided by residues 107–108 (RD), 123–124 (ER), and Asp-174.

Belongs to the methyltransferase superfamily. RsmJ family.

The protein localises to the cytoplasm. The catalysed reaction is guanosine(1516) in 16S rRNA + S-adenosyl-L-methionine = N(2)-methylguanosine(1516) in 16S rRNA + S-adenosyl-L-homocysteine + H(+). Specifically methylates the guanosine in position 1516 of 16S rRNA. The chain is Ribosomal RNA small subunit methyltransferase J from Coxiella burnetii (strain Dugway 5J108-111).